The chain runs to 462 residues: DIMBOA UDP-glucosyltransferase BX9 (462 aa).

The active-site Proton acceptor is the histidine 24. Histidine 24 is a binding site for an anthocyanidin. The Charge relay role is filled by aspartate 115. Residues threonine 137, alanine 336, glutamine 338, histidine 353, tryptophan 356, asparagine 357, serine 358, and glutamate 361 each coordinate UDP-alpha-D-glucose. Glycine 376 contacts an anthocyanidin. Aspartate 377 and glutamine 378 together coordinate UDP-alpha-D-glucose.

This sequence belongs to the UDP-glycosyltransferase family. It depends on Mg(2+) as a cofactor. The cofactor is Ca(2+). Expressed at the same levels in roots and shoots.

It catalyses the reaction DIMBOA + UDP-alpha-D-glucose = DIMBOA beta-D-glucoside + UDP + H(+). It carries out the reaction DIBOA + UDP-alpha-D-glucose = DIBOA beta-D-glucoside + UDP + H(+). Its function is as follows. Glucosyltransferase involved in the last step of benzoxazinoid glucoside biosynthesis. Catalyzes the glucosylation of hydroxamic acids utilizing UDP-glucose as glucose doner, reducing the toxicity of these natural insecticides for storage. Can use DIMBOA and DIBOA as substrates, HMBOA (2-hydroxy-7-methoxy-2H-1,4-benzoxazin-3(4H)-one) and HBOA (2-hydroxy-2H-1,4-benzoxazin-3(4H)-one) with a lower efficiency, but not indole acetic acid or quercitin. The polypeptide is DIMBOA UDP-glucosyltransferase BX9 (BX9) (Zea mays (Maize)).